We begin with the raw amino-acid sequence, 156 residues long: V-type sodium ATPase subunit K (156 aa).

The next 4 membrane-spanning stretches (helical) occupy residues 11 to 31, 60 to 80, 89 to 109, and 132 to 152; these read GMVF…IGSA, LLPG…FINL, GLNF…SGIA, and IIFA…SFLL.

This sequence belongs to the V-ATPase proteolipid subunit family. The N-terminus is blocked.

It localises to the cell membrane. Functionally, involved in ATP-driven sodium extrusion. The polypeptide is V-type sodium ATPase subunit K (ntpK) (Enterococcus hirae (strain ATCC 9790 / DSM 20160 / JCM 8729 / LMG 6399 / NBRC 3181 / NCIMB 6459 / NCDO 1258 / NCTC 12367 / WDCM 00089 / R)).